Consider the following 458-residue polypeptide: Adenylosuccinate synthetase (458 aa).

Residues Gly-17–Lys-23 and Gly-45–Thr-47 each bind GTP. Asp-18 (proton acceptor) is an active-site residue. Positions 18 and 45 each coordinate Mg(2+). IMP contacts are provided by residues Asp-18–Lys-21, Asn-43–His-46, Thr-137, Arg-151, Gln-247, Thr-262, and Arg-330. The active-site Proton donor is His-46. Val-326 to Arg-332 serves as a coordination point for substrate. Residues Arg-332, Lys-358 to Asp-360, and Ser-440 to Ser-442 each bind GTP.

This sequence belongs to the adenylosuccinate synthetase family. In terms of assembly, homodimer. Mg(2+) serves as cofactor.

Its subcellular location is the cytoplasm. It catalyses the reaction IMP + L-aspartate + GTP = N(6)-(1,2-dicarboxyethyl)-AMP + GDP + phosphate + 2 H(+). The protein operates within purine metabolism; AMP biosynthesis via de novo pathway; AMP from IMP: step 1/2. Plays an important role in the de novo pathway of purine nucleotide biosynthesis. Catalyzes the first committed step in the biosynthesis of AMP from IMP. The sequence is that of Adenylosuccinate synthetase from Verminephrobacter eiseniae (strain EF01-2).